The chain runs to 320 residues: L-lactate dehydrogenase (320 aa).

NAD(+)-binding positions include Val18, Asp39, Arg44, Tyr69, and Gly83 to Ala84. Residues Gln86 and Arg92 each contribute to the substrate site. NAD(+) contacts are provided by residues Thr105, Ala122 to Asn124, and Ser147. Substrate is bound at residue Asn124–Asp127. Asp152 to Arg155 contributes to the substrate binding site. Catalysis depends on His179, which acts as the Proton acceptor. A Phosphotyrosine modification is found at Tyr223. Position 232 (Thr232) interacts with substrate.

It belongs to the LDH/MDH superfamily. LDH family. As to quaternary structure, homotetramer.

The protein resides in the cytoplasm. It carries out the reaction (S)-lactate + NAD(+) = pyruvate + NADH + H(+). Its pathway is fermentation; pyruvate fermentation to lactate; (S)-lactate from pyruvate: step 1/1. In terms of biological role, catalyzes the conversion of lactate to pyruvate. The protein is L-lactate dehydrogenase of Pediococcus pentosaceus (strain ATCC 25745 / CCUG 21536 / LMG 10740 / 183-1w).